A 171-amino-acid polypeptide reads, in one-letter code: Protein-export protein SecB (171 aa).

It belongs to the SecB family. As to quaternary structure, homotetramer, a dimer of dimers. One homotetramer interacts with 1 SecA dimer.

The protein resides in the cytoplasm. Functionally, one of the proteins required for the normal export of preproteins out of the cell cytoplasm. It is a molecular chaperone that binds to a subset of precursor proteins, maintaining them in a translocation-competent state. It also specifically binds to its receptor SecA. This is Protein-export protein SecB from Histophilus somni (strain 2336) (Haemophilus somnus).